Here is a 97-residue protein sequence, read N- to C-terminus: Putative pterin-4-alpha-carbinolamine dehydratase (97 aa).

The protein belongs to the pterin-4-alpha-carbinolamine dehydratase family.

The catalysed reaction is (4aS,6R)-4a-hydroxy-L-erythro-5,6,7,8-tetrahydrobiopterin = (6R)-L-erythro-6,7-dihydrobiopterin + H2O. In Brucella abortus (strain S19), this protein is Putative pterin-4-alpha-carbinolamine dehydratase.